A 506-amino-acid polypeptide reads, in one-letter code: Pisatin demethylase (506 aa).

Heme is bound at residue C453.

The protein belongs to the cytochrome P450 family. Heme serves as cofactor.

Its function is as follows. Can detoxify the phytoalexin pisatin from garden pea. Pisatin is an antimicrobial compound produced by pea in response to infection by plant pathogens. In Fusarium vanettenii (Neocosmospora pisi), this protein is Pisatin demethylase (PDA6-1).